A 313-amino-acid polypeptide reads, in one-letter code: Olfactory receptor 5H15 (313 aa).

Residues 1–28 (MEEENATLLTEFVLTGFLYQPQWKIPLF) are Extracellular-facing. Asn5 is a glycosylation site (N-linked (GlcNAc...) asparagine). A helical transmembrane segment spans residues 29-49 (LAFLVIYLITIMGNLGLIAVI). Residues 50–56 (WKDPHLH) lie on the Cytoplasmic side of the membrane. The chain crosses the membrane as a helical span at residues 57 to 77 (IPMYLLLGNLAFVDAWISSTV). Residues 78-98 (TPKMLNNFLAKSKMISLSECK) are Extracellular-facing. A disulfide bridge connects residues Cys97 and Cys179. Residues 99-119 (IQFFSIAIGVTTECFLLATMA) form a helical membrane-spanning segment. The Cytoplasmic segment spans residues 120 to 143 (YDRYVAICKPLLYPAIMTNGLCIR). A helical membrane pass occupies residues 144-164 (LLILSYIAGILHALIHEGFLF). The Extracellular portion of the chain corresponds to 165 to 195 (RLTFCNSNIVHHIYCDTIPLSKISCTDSSIN). Residues 196–216 (FLMVFIFSGSIQVFSIVTILI) form a helical membrane-spanning segment. Over 217–240 (SYTFVLFTVLEKKSDKGVRKAFST) the chain is Cytoplasmic. The helical transmembrane segment at 241–261 (CGAHLFSVCLYYGPLLLMYVG) threads the bilayer. Over 262-271 (PASPQADGQN) the chain is Extracellular. The chain crosses the membrane as a helical span at residues 272-292 (MVEPLFYTVIIPLLNPIIYSL). Residues 293-313 (RNKQVIVSFIKMLKRNVKVSY) are Cytoplasmic-facing.

It belongs to the G-protein coupled receptor 1 family.

Its subcellular location is the cell membrane. In terms of biological role, odorant receptor. The polypeptide is Olfactory receptor 5H15 (OR5H15) (Homo sapiens (Human)).